Reading from the N-terminus, the 516-residue chain is Arginyl-tRNA--protein transferase 1 (516 aa).

Over residues 150 to 180 (IESEEKEKEKSIKKEGSKEFIHPQSIEEKLG) the composition is skewed to basic and acidic residues. The tract at residues 150-206 (IESEEKEKEKSIKKEGSKEFIHPQSIEEKLGSGEPSHPIKVHIGPKPGKGADLSKPP) is disordered.

The protein belongs to the R-transferase family. As to quaternary structure, monomer. Interacts with LIAT1; LIAT1 is not a substrate of ATE1, the interaction takes place in the cytoplasm and seems to increase ATE1 arginyltransferase activity. Interacts with LIAT1; has a higher affinity than the other isoforms. In terms of tissue distribution, widely expressed.

Its subcellular location is the nucleus. It is found in the cytoplasm. It carries out the reaction an N-terminal L-alpha-aminoacyl-[protein] + L-arginyl-tRNA(Arg) = an N-terminal L-arginyl-L-aminoacyl-[protein] + tRNA(Arg) + H(+). In terms of biological role, involved in the post-translational conjugation of arginine to the N-terminal aspartate or glutamate of a protein. This arginylation is required for degradation of the protein via the ubiquitin pathway. Does not arginylate cysteine residues. The chain is Arginyl-tRNA--protein transferase 1 from Mus musculus (Mouse).